Consider the following 127-residue polypeptide: Apolipoprotein C-IV (127 aa).

The signal sequence occupies residues 1–27 (MSLLRNRLQDLPALCLCVLVLACIGAC).

Belongs to the apolipoprotein C4 family.

The protein resides in the secreted. Its function is as follows. May participate in lipoprotein metabolism. This Papio anubis (Olive baboon) protein is Apolipoprotein C-IV (APOC4).